Consider the following 168-residue polypeptide: GPI-anchored protein LLG1 (168 aa).

The N-terminal stretch at 1–23 (MELLSRALFFFLLLSVLSSFSSS) is a signal peptide. Asn-57 is a glycosylation site (N-linked (GlcNAc...) asparagine). Residue Asn-144 is the site of GPI-anchor amidated asparagine attachment. A propeptide spans 145–168 (AATTSSSRLWLTVSAALLVFVKLF) (removed in mature form).

As to quaternary structure, interacts with FER. Expressed in pollen, pollen tubes, sporophytic pistil tissues, in the early stages of female gametophyte development, and in unfertilized, mature ovules. Expressed in roots, lateral roots, shoots, cotyledons, petioles, developing leaves and anther filaments.

It localises to the cell membrane. In terms of biological role, component of the FER-regulated Rho GTPase signaling complex. Acts as a chaperone and coreceptor for FER. Required for localization of FER to the plasma membrane. This is GPI-anchored protein LLG1 from Arabidopsis thaliana (Mouse-ear cress).